The primary structure comprises 148 residues: Snaclec B9 (148 aa).

A signal peptide spans 1-24 (MGRFIFVSFGLLVVFLSLSGTGAA). 3 disulfides stabilise this stretch: C27/C38, C55/C144, and C121/C136. Residues 34-145 (YDQHCYKVFD…CRLLGHFVCK (112 aa)) enclose the C-type lectin domain. N57 and N60 each carry an N-linked (GlcNAc...) asparagine glycan.

It belongs to the snaclec family. As to quaternary structure, heterodimer; disulfide-linked. As to expression, expressed by the venom gland.

The protein localises to the secreted. Its function is as follows. Interferes with one step of hemostasis (modulation of platelet aggregation, or coagulation cascade, for example). The protein is Snaclec B9 of Macrovipera lebetinus (Levantine viper).